We begin with the raw amino-acid sequence, 181 residues long: uncharacterized protein (181 aa).

A disordered region spans residues 126–148 (SYKDKEEEEDEDPEEDDDDPRVQ). A compositionally biased stretch (acidic residues) spans 131–144 (EEEEDEDPEEDDDD).

The protein belongs to the chlamydial CPn_0422/CT_273/TC_0545 family.

This is an uncharacterized protein from Chlamydia pneumoniae (Chlamydophila pneumoniae).